The primary structure comprises 121 residues: Large ribosomal subunit protein bL12 (121 aa).

This sequence belongs to the bacterial ribosomal protein bL12 family. In terms of assembly, homodimer. Part of the ribosomal stalk of the 50S ribosomal subunit. Forms a multimeric L10(L12)X complex, where L10 forms an elongated spine to which 2 to 4 L12 dimers bind in a sequential fashion. Binds GTP-bound translation factors.

Functionally, forms part of the ribosomal stalk which helps the ribosome interact with GTP-bound translation factors. Is thus essential for accurate translation. This is Large ribosomal subunit protein bL12 from Streptococcus pyogenes serotype M3 (strain ATCC BAA-595 / MGAS315).